The sequence spans 472 residues: Violaxanthin de-epoxidase, chloroplastic (472 aa).

6 disulfide bridges follow: C133/C151, C138/C145, C157/C174, C161/C170, C189/C196, and C242/C372. Positions 379-462 form a coiled coil; the sequence is VERLEKTVEE…MEAGEVEKLF (84 aa).

The protein belongs to the calycin superfamily. Lipocalin family. Post-translationally, disulfide bonds. Reduction of the disulfides results in loss of a rigid structure, a decrease in thermal stability of 15 degrees Celsius and a loss of activity.

The protein resides in the plastid. It is found in the chloroplast thylakoid membrane. The catalysed reaction is all-trans-violaxanthin + 2 L-ascorbate = all-trans-zeaxanthin + 2 L-dehydroascorbate + 2 H2O. Its activity is regulated as follows. Irreversibly inhibited by DTT and iodoacetamide at pH 5.7 or pH 5.2, but not at pH 7.2. Regulated through Ca(2+) gating of H(+) flux at the CFoH(+) channel. Requires the presence of lipids forming reverse hexagonal structures such as monogalactosyldiacylglyceride (MGDG) or phosphatidylethanolamine. A negative curvature elastic stress in the thylakoid lipid bilayer is required for VDE1 activity. Its function is as follows. Part of the xanthophyll (or violaxanthin) cycle for controlling the concentration of zeaxanthin in chloroplasts. Catalyzes the two-step mono de-epoxidation reaction. Stereospecific for all-trans xanthophylls. Zeaxanthin induces the dissipation of excitation energy in the chlorophyll of the light-harvesting protein complex of photosystem II. This Spinacia oleracea (Spinach) protein is Violaxanthin de-epoxidase, chloroplastic.